The primary structure comprises 73 residues: Bacterioferritin-associated ferredoxin (73 aa).

The [2Fe-2S] cluster site is built by C4 and C6. Positions 26 and 29 each coordinate phosphate. [2Fe-2S] cluster contacts are provided by C38 and C41. K46 is a binding site for phosphate.

Belongs to the Bfd family. In terms of assembly, monomer. Interacts with BfrB; up to 12 Bfd proteins can bind to the BfrB bacterioferritin complex (BFR). One Bfd protein binds to a BfrB dimer in the BFR, with the [2Fe-2S] cluster positioned about 22 Angstroms above the heme of BfrB. Does not interact with FtnA. [2Fe-2S] cluster serves as cofactor. Requires phosphate as cofactor.

Functionally, required for mobilization of iron from the bacterioferritin (BFR) complex, composed of BfrB and FtnA in varying proportions; mobilization requires the [2Fe-2S] cluster of this protein. Reduction of the BfrB heme group occurs in the presence of Bfd, strongly suggesting that the BfrB-Bfd complex allows heme to mediate electron transfer from FPR to the Fe(3+) iron core in the BFR prior to its release as Fe(2+). In Pseudomonas aeruginosa (strain ATCC 15692 / DSM 22644 / CIP 104116 / JCM 14847 / LMG 12228 / 1C / PRS 101 / PAO1), this protein is Bacterioferritin-associated ferredoxin.